A 145-amino-acid chain; its full sequence is 3-hydroxyacyl-[acyl-carrier-protein] dehydratase FabZ (145 aa).

The active site involves His-47.

The protein belongs to the thioester dehydratase family. FabZ subfamily.

It localises to the cytoplasm. The catalysed reaction is a (3R)-hydroxyacyl-[ACP] = a (2E)-enoyl-[ACP] + H2O. Functionally, involved in unsaturated fatty acids biosynthesis. Catalyzes the dehydration of short chain beta-hydroxyacyl-ACPs and long chain saturated and unsaturated beta-hydroxyacyl-ACPs. The polypeptide is 3-hydroxyacyl-[acyl-carrier-protein] dehydratase FabZ (Acidovorax sp. (strain JS42)).